The following is a 719-amino-acid chain: DNA ligase (719 aa).

NAD(+) is bound by residues 42–46 (DAEYD), 91–92 (SL), and Glu-125. The active-site N6-AMP-lysine intermediate is Lys-127. NAD(+)-binding residues include Arg-148, Glu-184, Lys-300, and Lys-324. Residues Cys-429, Cys-432, Cys-447, and Cys-453 each contribute to the Zn(2+) site. The 82-residue stretch at 638-719 (TASSPIAEKI…WMRLIKGHNI (82 aa)) folds into the BRCT domain.

This sequence belongs to the NAD-dependent DNA ligase family. LigA subfamily. Mg(2+) serves as cofactor. Mn(2+) is required as a cofactor.

The catalysed reaction is NAD(+) + (deoxyribonucleotide)n-3'-hydroxyl + 5'-phospho-(deoxyribonucleotide)m = (deoxyribonucleotide)n+m + AMP + beta-nicotinamide D-nucleotide.. In terms of biological role, DNA ligase that catalyzes the formation of phosphodiester linkages between 5'-phosphoryl and 3'-hydroxyl groups in double-stranded DNA using NAD as a coenzyme and as the energy source for the reaction. It is essential for DNA replication and repair of damaged DNA. This Bartonella tribocorum (strain CIP 105476 / IBS 506) protein is DNA ligase.